The primary structure comprises 162 residues: MSGLTHFDASGHAHMVDVGGKQETQRIAIARGTIRMLPATFALIRDGKAKKGDVLGVARIAAIQGAKRTADLIPLCHPLALTRVAVDFELDDALPGVHCVVQVETFGRTGVEMEALTAVQVGLLTVYDMCKAVDRGMVITDVSVREKRGGKSGDWKAEDTAG.

Substrate-binding positions include 75–77 and 113–114; these read LCH and ME. The active site involves Asp128.

The protein belongs to the MoaC family. As to quaternary structure, homohexamer; trimer of dimers.

It catalyses the reaction (8S)-3',8-cyclo-7,8-dihydroguanosine 5'-triphosphate = cyclic pyranopterin phosphate + diphosphate. It participates in cofactor biosynthesis; molybdopterin biosynthesis. In terms of biological role, catalyzes the conversion of (8S)-3',8-cyclo-7,8-dihydroguanosine 5'-triphosphate to cyclic pyranopterin monophosphate (cPMP). The sequence is that of Cyclic pyranopterin monophosphate synthase from Burkholderia lata (strain ATCC 17760 / DSM 23089 / LMG 22485 / NCIMB 9086 / R18194 / 383).